The primary structure comprises 365 residues: tRNA N6-adenosine threonylcarbamoyltransferase (365 aa).

Histidine 119 and histidine 123 together coordinate Fe cation. Substrate-binding positions include 141-145, aspartate 174, glycine 187, and asparagine 288; that span reads LVSGG. Residue aspartate 316 coordinates Fe cation.

The protein belongs to the KAE1 / TsaD family. Fe(2+) serves as cofactor.

Its subcellular location is the cytoplasm. It catalyses the reaction L-threonylcarbamoyladenylate + adenosine(37) in tRNA = N(6)-L-threonylcarbamoyladenosine(37) in tRNA + AMP + H(+). Its function is as follows. Required for the formation of a threonylcarbamoyl group on adenosine at position 37 (t(6)A37) in tRNAs that read codons beginning with adenine. Is involved in the transfer of the threonylcarbamoyl moiety of threonylcarbamoyl-AMP (TC-AMP) to the N6 group of A37, together with TsaE and TsaB. TsaD likely plays a direct catalytic role in this reaction. This is tRNA N6-adenosine threonylcarbamoyltransferase from Agrobacterium fabrum (strain C58 / ATCC 33970) (Agrobacterium tumefaciens (strain C58)).